The following is a 152-amino-acid chain: Superoxide dismutase [Cu-Zn] 2 (152 aa).

3 residues coordinate Cu cation: His45, His47, and His62. The disordered stretch occupies residues 53 to 81 (TNGSMSTGPHFNPDGKQHGAPEDANRHAG). The Zn(2+) site is built by His62, His70, His79, and Asp82. The segment covering 65–81 (PDGKQHGAPEDANRHAG) has biased composition (basic and acidic residues). His119 contacts Cu cation.

The protein belongs to the Cu-Zn superoxide dismutase family. In terms of assembly, homodimer. The cofactor is Cu cation. Zn(2+) serves as cofactor.

The protein resides in the cytoplasm. It carries out the reaction 2 superoxide + 2 H(+) = H2O2 + O2. In terms of biological role, destroys radicals which are normally produced within the cells and which are toxic to biological systems. This Brassica juncea (Indian mustard) protein is Superoxide dismutase [Cu-Zn] 2 (SODCC2).